Here is a 413-residue protein sequence, read N- to C-terminus: Eukaryotic initiation factor 4A-8 (413 aa).

Positions 40–68 (DSFDAMGLQENLLRGIYAYGFEKPSAIQQ) match the Q motif motif. The region spanning 71-241 (IVPFCKGLDV…RKFMNKPVRI (171 aa)) is the Helicase ATP-binding domain. An ATP-binding site is contributed by 84–91 (AQSGTGKT). The DEAD box signature appears at 189-192 (DEAD). The 162-residue stretch at 252–413 (GIKQFYVNVD…ELPSNVADLL (162 aa)) folds into the Helicase C-terminal domain.

The protein belongs to the DEAD box helicase family. eIF4A subfamily. As to quaternary structure, eIF4F is a multi-subunit complex, the composition of which varies with external and internal environmental conditions. It is composed of at least EIF4A, EIF4E and EIF4G. Pollen specific.

It catalyses the reaction ATP + H2O = ADP + phosphate + H(+). ATP-dependent RNA helicase which is a subunit of the eIF4F complex involved in cap recognition and is required for mRNA binding to ribosome. In the current model of translation initiation, eIF4A unwinds RNA secondary structures in the 5'-UTR of mRNAs which is necessary to allow efficient binding of the small ribosomal subunit, and subsequent scanning for the initiator codon. The sequence is that of Eukaryotic initiation factor 4A-8 from Nicotiana tabacum (Common tobacco).